The chain runs to 110 residues: Acylphosphatase (110 aa).

Residues 20–108 enclose the Acylphosphatase-like domain; it reads RAHIFVRGKV…GEFNDFSILP (89 aa). Catalysis depends on residues Arg35 and Asn53.

Belongs to the acylphosphatase family.

The catalysed reaction is an acyl phosphate + H2O = a carboxylate + phosphate + H(+). This Pyrobaculum calidifontis (strain DSM 21063 / JCM 11548 / VA1) protein is Acylphosphatase (acyP).